We begin with the raw amino-acid sequence, 74 residues long: Kappa-stichotoxin-Shd5a (74 aa).

Positions 1 to 22 (MKFQVIAAVLLIAFCLCVVVTA) are cleaved as a signal peptide. The propeptide occupies 23–39 (RMELQDVEDVENGFQKR). In terms of domain architecture, ShKT spans 42 to 74 (CIDTIPQSRCTAFQCKHSMKYRLSFCRKTCGTC). 3 cysteine pairs are disulfide-bonded: Cys-42–Cys-74, Cys-51–Cys-67, and Cys-56–Cys-71.

The protein belongs to the sea anemone type 1 potassium channel toxin family. Type 1a subfamily.

Its subcellular location is the secreted. The protein resides in the nematocyst. Its function is as follows. Inhibits voltage-gated potassium channels (Kv) with higher potency for Kv1.1/KCNA1 and Kv1.3/KCNA3. The protein is Kappa-stichotoxin-Shd5a of Stichodactyla haddoni (Saddle carpet anemone).